The following is a 600-amino-acid chain: Dihydroxy-acid dehydratase (600 aa).

Asp-82 is a binding site for Mg(2+). Position 123 (Cys-123) interacts with [2Fe-2S] cluster. Positions 124 and 125 each coordinate Mg(2+). Lys-125 carries the N6-carboxylysine modification. Cys-192 contributes to the [2Fe-2S] cluster binding site. Glu-489 contributes to the Mg(2+) binding site. The Proton acceptor role is filled by Ser-515.

Belongs to the IlvD/Edd family. In terms of assembly, homodimer. [2Fe-2S] cluster is required as a cofactor. The cofactor is Mg(2+).

It catalyses the reaction (2R)-2,3-dihydroxy-3-methylbutanoate = 3-methyl-2-oxobutanoate + H2O. It carries out the reaction (2R,3R)-2,3-dihydroxy-3-methylpentanoate = (S)-3-methyl-2-oxopentanoate + H2O. It functions in the pathway amino-acid biosynthesis; L-isoleucine biosynthesis; L-isoleucine from 2-oxobutanoate: step 3/4. Its pathway is amino-acid biosynthesis; L-valine biosynthesis; L-valine from pyruvate: step 3/4. Its function is as follows. Functions in the biosynthesis of branched-chain amino acids. Catalyzes the dehydration of (2R,3R)-2,3-dihydroxy-3-methylpentanoate (2,3-dihydroxy-3-methylvalerate) into 2-oxo-3-methylpentanoate (2-oxo-3-methylvalerate) and of (2R)-2,3-dihydroxy-3-methylbutanoate (2,3-dihydroxyisovalerate) into 2-oxo-3-methylbutanoate (2-oxoisovalerate), the penultimate precursor to L-isoleucine and L-valine, respectively. In Bacteroides thetaiotaomicron (strain ATCC 29148 / DSM 2079 / JCM 5827 / CCUG 10774 / NCTC 10582 / VPI-5482 / E50), this protein is Dihydroxy-acid dehydratase.